A 150-amino-acid polypeptide reads, in one-letter code: SKP1-like protein 17 (150 aa).

The interaction with the F-box domain of F-box proteins stretch occupies residues leucine 92–asparagine 150.

Belongs to the SKP1 family. As to quaternary structure, part of a SCF (SKP1-cullin-F-box) protein ligase complex. Interacts with CPR1/CPR30. As to expression, mainly detected in the siliques.

It localises to the nucleus. It functions in the pathway protein modification; protein ubiquitination. Involved in ubiquitination and subsequent proteasomal degradation of target proteins. Together with CUL1, RBX1 and a F-box protein, it forms a SCF E3 ubiquitin ligase complex. The functional specificity of this complex depends on the type of F-box protein. In the SCF complex, it serves as an adapter that links the F-box protein to CUL1. Probably implicated in incompatibility response after hybridization. The sequence is that of SKP1-like protein 17 (ASK17) from Arabidopsis thaliana (Mouse-ear cress).